The following is a 396-amino-acid chain: Tryptophan synthase beta chain (396 aa).

N6-(pyridoxal phosphate)lysine is present on K88.

Belongs to the TrpB family. As to quaternary structure, tetramer of two alpha and two beta chains. Pyridoxal 5'-phosphate is required as a cofactor.

It carries out the reaction (1S,2R)-1-C-(indol-3-yl)glycerol 3-phosphate + L-serine = D-glyceraldehyde 3-phosphate + L-tryptophan + H2O. The protein operates within amino-acid biosynthesis; L-tryptophan biosynthesis; L-tryptophan from chorismate: step 5/5. Functionally, the beta subunit is responsible for the synthesis of L-tryptophan from indole and L-serine. The sequence is that of Tryptophan synthase beta chain from Shewanella sp. (strain MR-7).